The chain runs to 69 residues: U5-agatoxin-Ao1a (69 aa).

The first 20 residues, 1 to 20 (MRTIISLLLLSAMVFAVIEA), serve as a signal peptide directing secretion. A propeptide spanning residues 21–34 (ISLEEGLQLFEGER) is cleaved from the precursor. 2 cysteine pairs are disulfide-bonded: Cys36–Cys52 and Cys43–Cys57.

It belongs to the neurotoxin 01 (U2-agtx) family. In terms of processing, does not contain a cysteine at position 61 which disrupts the cysteine framework. Expressed by the venom gland.

It is found in the secreted. This Agelena orientalis (Funnel-web spider) protein is U5-agatoxin-Ao1a.